We begin with the raw amino-acid sequence, 227 residues long: Mediator of RNA polymerase II transcription subunit 18 (227 aa).

Belongs to the Mediator complex subunit 18 family. Component of the Mediator complex.

The protein resides in the nucleus. Component of the Mediator complex, a coactivator involved in the regulated transcription of nearly all RNA polymerase II-dependent genes. Mediator functions as a bridge to convey information from gene-specific regulatory proteins to the basal RNA polymerase II transcription machinery. Mediator is recruited to promoters by direct interactions with regulatory proteins and serves as a scaffold for the assembly of a functional preinitiation complex with RNA polymerase II and the general transcription factors. This chain is Mediator of RNA polymerase II transcription subunit 18 (mdt-18), found in Caenorhabditis briggsae.